Reading from the N-terminus, the 289-residue chain is Ribosomal RNA small subunit methyltransferase A (289 aa).

6 residues coordinate S-adenosyl-L-methionine: N33, V35, G60, E81, D111, and N130.

The protein belongs to the class I-like SAM-binding methyltransferase superfamily. rRNA adenine N(6)-methyltransferase family. RsmA subfamily.

It localises to the cytoplasm. The enzyme catalyses adenosine(1518)/adenosine(1519) in 16S rRNA + 4 S-adenosyl-L-methionine = N(6)-dimethyladenosine(1518)/N(6)-dimethyladenosine(1519) in 16S rRNA + 4 S-adenosyl-L-homocysteine + 4 H(+). Functionally, specifically dimethylates two adjacent adenosines (A1518 and A1519) in the loop of a conserved hairpin near the 3'-end of 16S rRNA in the 30S particle. May play a critical role in biogenesis of 30S subunits. The protein is Ribosomal RNA small subunit methyltransferase A of Corynebacterium efficiens (strain DSM 44549 / YS-314 / AJ 12310 / JCM 11189 / NBRC 100395).